A 63-amino-acid polypeptide reads, in one-letter code: Putative ankyrin repeat protein RF_p14 (63 aa).

2 ANK repeats span residues 11–43 (KLNQ…CRDH) and 44–63 (QGDT…ILDI).

The sequence is that of Putative ankyrin repeat protein RF_p14 from Rickettsia felis (strain ATCC VR-1525 / URRWXCal2) (Rickettsia azadi).